A 97-amino-acid polypeptide reads, in one-letter code: Aspartyl/glutamyl-tRNA(Asn/Gln) amidotransferase subunit C (97 aa).

It belongs to the GatC family. As to quaternary structure, heterotrimer of A, B and C subunits.

It carries out the reaction L-glutamyl-tRNA(Gln) + L-glutamine + ATP + H2O = L-glutaminyl-tRNA(Gln) + L-glutamate + ADP + phosphate + H(+). The catalysed reaction is L-aspartyl-tRNA(Asn) + L-glutamine + ATP + H2O = L-asparaginyl-tRNA(Asn) + L-glutamate + ADP + phosphate + 2 H(+). Its function is as follows. Allows the formation of correctly charged Asn-tRNA(Asn) or Gln-tRNA(Gln) through the transamidation of misacylated Asp-tRNA(Asn) or Glu-tRNA(Gln) in organisms which lack either or both of asparaginyl-tRNA or glutaminyl-tRNA synthetases. The reaction takes place in the presence of glutamine and ATP through an activated phospho-Asp-tRNA(Asn) or phospho-Glu-tRNA(Gln). The protein is Aspartyl/glutamyl-tRNA(Asn/Gln) amidotransferase subunit C of Nostoc punctiforme (strain ATCC 29133 / PCC 73102).